A 680-amino-acid polypeptide reads, in one-letter code: WD repeat-containing protein 48 homolog (680 aa).

WD repeat units follow at residues 26 to 65, 71 to 110, 113 to 152, 164 to 203, 206 to 245, 248 to 287, 290 to 329, and 350 to 389; these read QHRNGVNSLQLDPNNGKLYSAGRDAIIRVWNTRSESSEKY, HHNDWVNDIVLCCNGRNLISASCDTTVKVWNAQKGFCMST, THRDYVQALAYAKDREQVASAGLDKAIFLWDVNTLTALTA, GSKDSIYSLAMNPSGTVIVSGSTENILRIWDPRTCMRSMK, GHTENVRCLVVSPDGNQVVSGSSDGTIKVWNLGQQRCVQT, VHKEGVWSLLMSENFQYIISGSRDQNIIVTEMRNPSNKTL, EEKAPVLSLGYNMDKTGVWATTWNSDIRCWKLPMYDRGTL, and KGGAAIKECTVLNDKRYILTKDSQDQVVLYDVLRVVKKDT. Residues 594–618 form a disordered region; that stretch reads TPSGANANNSLQNSQSDGNSEGSQL. Over residues 596 to 609 the composition is skewed to low complexity; the sequence is SGANANNSLQNSQS.

This sequence belongs to the WD repeat WDR48 family. In terms of assembly, catalytic component of the Usp12-46 deubiquitylase complex consisting of Usp12-46, Wdr20 and Uaf1; regulatory subunit that, together wtih Wdr20, stabilizes Usp12-46. The Usp12-46 deubiquitylase complex associates with arr/arrow; the interaction leads to deubiquitination and stabilization of arr/arrow.

In terms of biological role, regulatory component of the Usp12-46 deubiquitylase complex. activates deubiquitination by increasing the catalytic turnover without increasing the affinity of deubiquitinating enzymes for the substrate. The complex deubiquitylates the wg/wingless-signaling receptor arr/arrow, which stabilizes the receptor and increases its concentration at the cell surface; this enhances the sensitivity of cells to wg/wingless-signal stimulation. This increases the amplitude and spatial range of the signaling response to the wg/wingless morphogen gradient, facilitating the precise concentration-dependent regulation of its target genes. Together with Wdr20 and Usp12-46 required for wg/wingless-mediated signaling in the wing imaginal disc and for wg/wingless-dependent regulation of intestinal stem cell proliferation. In Drosophila persimilis (Fruit fly), this protein is WD repeat-containing protein 48 homolog.